A 319-amino-acid polypeptide reads, in one-letter code: G-protein coupled receptor 171 (319 aa).

Residues Met1–Phe21 lie on the Extracellular side of the membrane. N-linked (GlcNAc...) asparagine glycosylation is present at Asn3. Residues Tyr22–Lys42 traverse the membrane as a helical segment. Topologically, residues Asn43 to Cys48 are cytoplasmic. The helical transmembrane segment at Val49 to Val69 threads the bilayer. Over Lys70–Val89 the chain is Extracellular. The chain crosses the membrane as a helical span at residues Thr90–Ile110. Residues Asp111–Lys132 are Cytoplasmic-facing. A helical membrane pass occupies residues Met133–Pro153. Over Ile154 to Asn181 the chain is Extracellular. A helical membrane pass occupies residues Phe182–Val202. Topologically, residues Ile203–Ser224 are cytoplasmic. Residues Ile225–Pro245 form a helical membrane-spanning segment. At Tyr246 to Glu268 the chain is on the extracellular side. Residues Ala269 to Ser289 form a helical membrane-spanning segment. The Cytoplasmic portion of the chain corresponds to Lys290–Ala319.

This sequence belongs to the G-protein coupled receptor 1 family.

The protein localises to the cell membrane. G-protein coupled receptor for Big LEN, a 16-amino acid neuropeptide produced from the precursor protein, proSAAS (encoded by PCSK1N). Acts through a G(i)-alpha-mediated pathway in response to bigLEN. Big LEN-GPR171 system plays an important role in regulating feeding and metabolism. Also plays a role in modulating fear and anxiety-like behaviors in the basolateral amygdala. Big LEN-GPR171 modulates the mu-type opioid receptor signaling and antinociception. Acts as a negative regulator T cell function. The chain is G-protein coupled receptor 171 (GPR171) from Bos taurus (Bovine).